We begin with the raw amino-acid sequence, 244 residues long: MRRPNGMIAILTGAGISAESGISTFRDQNGLWENHRVEDVCTPAAFLKQPTVVQRFYNERRRALLSPEVKPNASHQALARLQREYKDGQVVIITQNIDDLHERAGSRQVLHMHGELLKVRCTATGRVFESREDVIHGESKCECCGVVETLRPHIVWFNEMPLYMDVIDEVVQNAGLFVAVGTSGNVYPAAGLVMIAKAHGAETLELNLEPSGNCRDFDRSVYGPASVIVPAWADEVLHGKGPAA.

One can recognise a Deacetylase sirtuin-type domain in the interval 1 to 239 (MRRPNGMIAI…PAWADEVLHG (239 aa)). 13–32 (GAGISAESGISTFRDQNGLW) is an NAD(+) binding site. Substrate contacts are provided by Y57 and R60. Position 95–98 (95–98 (QNID)) interacts with NAD(+). H113 serves as the catalytic Proton acceptor. Zn(2+) contacts are provided by C121 and C141. NAD(+)-binding positions include 181–183 (GTS) and A225.

The protein belongs to the sirtuin family. Class III subfamily. Zn(2+) serves as cofactor.

The protein localises to the mitochondrion. It catalyses the reaction N(6)-malonyl-L-lysyl-[protein] + NAD(+) + H2O = 2''-O-malonyl-ADP-D-ribose + nicotinamide + L-lysyl-[protein]. The enzyme catalyses N(6)-succinyl-L-lysyl-[protein] + NAD(+) + H2O = 2''-O-succinyl-ADP-D-ribose + nicotinamide + L-lysyl-[protein]. It carries out the reaction N(6)-glutaryl-L-lysyl-[protein] + NAD(+) + H2O = 2''-O-glutaryl-ADP-D-ribose + nicotinamide + L-lysyl-[protein]. In terms of biological role, NAD-dependent lysine demalonylase, desuccinylase and deglutarylase that specifically removes malonyl, succinyl and glutaryl groups on target proteins. Has weak NAD-dependent protein deacetylase activity; however this activity may not be physiologically relevant in vivo. This chain is NAD-dependent protein deacylase SIR2rp3 (SIR2rp3), found in Trypanosoma brucei brucei (strain 927/4 GUTat10.1).